The primary structure comprises 273 residues: Phosphate import ATP-binding protein PstB (273 aa).

The 240-residue stretch at 19–258 (LSLQNVTISY…FNDTDKIFNA (240 aa)) folds into the ABC transporter domain. Residue 51 to 58 (GPSGCGKS) coordinates ATP.

The protein belongs to the ABC transporter superfamily. Phosphate importer (TC 3.A.1.7) family. The complex is composed of two ATP-binding proteins (PstB), two transmembrane proteins (PstC and PstA) and a solute-binding protein (PstS).

Its subcellular location is the cell inner membrane. It catalyses the reaction phosphate(out) + ATP + H2O = ADP + 2 phosphate(in) + H(+). Functionally, part of the ABC transporter complex PstSACB involved in phosphate import. Responsible for energy coupling to the transport system. The polypeptide is Phosphate import ATP-binding protein PstB (Synechococcus sp. (strain CC9605)).